Here is a 442-residue protein sequence, read N- to C-terminus: Proline--tRNA ligase (442 aa).

The protein belongs to the class-II aminoacyl-tRNA synthetase family. ProS type 2 subfamily. As to quaternary structure, homodimer.

It is found in the cytoplasm. The enzyme catalyses tRNA(Pro) + L-proline + ATP = L-prolyl-tRNA(Pro) + AMP + diphosphate. Its function is as follows. Catalyzes the attachment of proline to tRNA(Pro) in a two-step reaction: proline is first activated by ATP to form Pro-AMP and then transferred to the acceptor end of tRNA(Pro). This Brucella suis (strain ATCC 23445 / NCTC 10510) protein is Proline--tRNA ligase.